The primary structure comprises 2590 residues: 5-methylorsellinic acid synthase (2590 aa).

The interval Leu6 to Ala255 is N-terminal acylcarrier protein transacylase domain (SAT). The Ketosynthase family 3 (KS3) domain maps to Gly369–Gln784. Active-site for beta-ketoacyl synthase activity residues include Cys534, His669, and His707. Residues Leu891–Pro1191 form a malonyl-CoA:ACP transacylase (MAT) domain region. The For acyl/malonyl transferase activity role is filled by Ser978. An N-terminal hotdog fold region spans residues Pro1263 to Ser1393. Positions Pro1263 to Lys1569 constitute a PKS/mFAS DH domain. Residues Ser1267–Leu1568 form a product template (PT) domain region. The active-site Proton acceptor; for dehydratase activity is the His1297. Residues Thr1421 to Lys1569 are C-terminal hotdog fold. Asp1481 acts as the Proton donor; for dehydratase activity in catalysis. Residues Leu1587–Ala1612 form a disordered region. Carrier domains are found at residues Ala1617–Thr1691 and Ser1736–Pro1812. An O-(pantetheine 4'-phosphoryl)serine mark is found at Ser1651 and Ser1772. A methyltransferase (CMeT) domain region spans residues Gln1980–Asp2212. The interval Leu2282–Leu2590 is thioesterase (TE) domain.

It carries out the reaction 3 malonyl-CoA + acetyl-CoA + S-adenosyl-L-methionine + H(+) = 5-methylorsellinate + S-adenosyl-L-homocysteine + 3 CO2 + 4 CoA. It participates in secondary metabolite biosynthesis. Functionally, non-reducing polyketide synthase; part of the cluster A that mediates the biosynthesis of azasperpyranones, members of the azaphilone family that exhibit anti-cancer activities. Azasperpyranones are synthesized by 2 clusters, A and B. Cluster A is responsible for the production of the polyhydric phenol moiety while the azaphilonoid scaffold is produced by the cluster B. The non-reducing polyketide synthase ATEG_03629 produces 5-methyl orsellinic acid, which is then reduced to 5-methyl orsellinic aldehyde by the NRPS-like protein ATEG_03630. 5-methyl orsellinic aldehyde is then first hydroxylated by the FAD-dependent monooxygenase ATEG_03635 and subsequently hydroxylated by the cytochrome P450 monooxygenase ATEG_03631 to produce the unstable polyhydric phenol precursor of azasperpyranones. On the other hand, the polyketide synthase ATEG_07659 is responsible for producing the 3,5-dimethyloctadienone moiety from acetyl-CoA, three malonyl-CoA, and two S-adenosyl methionines (SAM). The 3,5-dimethyloctadienone moiety is then loaded onto the SAT domain of ATEG_07661 and extended with four malonyl-CoA and one SAM, which leads to the formation of 2,4-dihydroxy-6-(5,7-dimethyl-2-oxo-trans-3-trans-5-nonadienyl)-3-methylbenzaldehyde (compound 8) after reductive release and aldol condensation. The FAD-dependent monooxygenase ATEG_07662 is the next enzyme in the biosynthesis sequence and hydroxylates the side chain at the benzylic position of compound 8. In Aspergillus nidulans, afoF, the ortholog of the FAD-dependent oxygenase ATEG_07660, is the key enzyme for the biosynthesis of asperfuranone by catalyzing the hydroxylation at C-8 of to prevent the formation of a six-membered ring hemiacetal intermediate and thus facilitating the formation of a five-membered ring to produce asperfuranone. In Aspergillus terreus, ATEG_07660 is probably not functional, which leads to the formation of the six-membered ring hemiacetal intermediate presperpyranone instead of asperfuranone. Finally, ATEG_03636 is involved in the condensation of the polyhydric phenol moiety produced by cluster A and the perasperpyranone precursor produced by cluster B, to yield azasperpyranone A. Further modifications of azasperpyranone A result in the production of derivatives, including azasperpyranone B to F. This chain is 5-methylorsellinic acid synthase, found in Aspergillus terreus (strain NIH 2624 / FGSC A1156).